The chain runs to 103 residues: MKKELILKFLWLEKSIAVCLDQKVGDSITPLTEFFFWPQKDAWEEMKNFLESQSWITQSDSVNLLNNITEVINFWQERDTNVIDRKHISNLREKFPDIIVIGQ.

Belongs to the chloroplast-specific ribosomal protein cS23 family. In terms of assembly, part of the 30S ribosomal subunit.

Its subcellular location is the plastid. The protein localises to the chloroplast. Its function is as follows. Probably a ribosomal protein or a ribosome-associated protein. This is Small ribosomal subunit protein cS23 (ycf65) from Euglena granulata.